Consider the following 206-residue polypeptide: Pyrrolidone-carboxylate peptidase (206 aa).

Residues Glu-76, Cys-139, and His-163 contribute to the active site.

It belongs to the peptidase C15 family. As to quaternary structure, homotetramer.

It is found in the cytoplasm. The enzyme catalyses Release of an N-terminal pyroglutamyl group from a polypeptide, the second amino acid generally not being Pro.. Functionally, removes 5-oxoproline from various penultimate amino acid residues except L-proline. The sequence is that of Pyrrolidone-carboxylate peptidase (pcp) from Pyrococcus horikoshii (strain ATCC 700860 / DSM 12428 / JCM 9974 / NBRC 100139 / OT-3).